The chain runs to 320 residues: (+)-corvol ether B synthase/(+)-corvol ether A synthase ((2E,6E)-farnesyl diphosphate cyclizing) (320 aa).

Positions 78 and 83 each coordinate Mg(2+). Positions 78-83 (DDLFVD) match the DDXXXD motif motif. Arg-171 contacts substrate. Positions 217, 221, and 225 each coordinate Mg(2+).

This sequence belongs to the terpene synthase family. The cofactor is Mg(2+).

It carries out the reaction (2E,6E)-farnesyl diphosphate + H2O = (+)-corvol ether B + diphosphate. The catalysed reaction is (2E,6E)-farnesyl diphosphate + H2O = (+)-corvol ether A + diphosphate. It participates in secondary metabolite biosynthesis; terpenoid biosynthesis. Its function is as follows. Catalyzes the conversion of (2E,6E)-farnesyl diphosphate (FPP) into (+)-corvol ether A and (+)-corvol ether B via a 1,10-cyclization, which requires isomerization of FPP to nerolidyl diphosphate (NPP) and then abstraction of the pyrophosphate from intermediate NPP leading to a (E,Z)-germacradienyl (helminthogermacradienyl) cation. The preferred substrate is (2E,6E)-farnesyl diphosphate (FPP), however geranyl diphosphate (GPP) is also able to produce small amounts of several acyclic and cyclic monoterpenes, with linalool as the main product. The protein is (+)-corvol ether B synthase/(+)-corvol ether A synthase ((2E,6E)-farnesyl diphosphate cyclizing) of Kitasatospora setae (strain ATCC 33774 / DSM 43861 / JCM 3304 / KCC A-0304 / NBRC 14216 / KM-6054) (Streptomyces setae).